The chain runs to 155 residues: Putative pre-16S rRNA nuclease (155 aa).

The interval 136-155 (DAERATSRPPGHPVEPRIGP) is disordered.

The protein belongs to the YqgF nuclease family.

Its subcellular location is the cytoplasm. Its function is as follows. Could be a nuclease involved in processing of the 5'-end of pre-16S rRNA. This Leifsonia xyli subsp. xyli (strain CTCB07) protein is Putative pre-16S rRNA nuclease.